The sequence spans 99 residues: Large ribosomal subunit protein eL36 (99 aa).

This sequence belongs to the eukaryotic ribosomal protein eL36 family. Component of the large ribosomal subunit. Mature ribosomes consist of a small (40S) and a large (60S) subunit. The 40S subunit contains about 32 different proteins and 1 molecule of RNA (18S). The 60S subunit contains 45 different proteins and 3 molecules of RNA (25S, 5.8S and 5S).

The protein resides in the cytoplasm. Its function is as follows. Component of the ribosome, a large ribonucleoprotein complex responsible for the synthesis of proteins in the cell. The small ribosomal subunit (SSU) binds messenger RNAs (mRNAs) and translates the encoded message by selecting cognate aminoacyl-transfer RNA (tRNA) molecules. The large subunit (LSU) contains the ribosomal catalytic site termed the peptidyl transferase center (PTC), which catalyzes the formation of peptide bonds, thereby polymerizing the amino acids delivered by tRNAs into a polypeptide chain. The nascent polypeptides leave the ribosome through a tunnel in the LSU and interact with protein factors that function in enzymatic processing, targeting, and the membrane insertion of nascent chains at the exit of the ribosomal tunnel. The polypeptide is Large ribosomal subunit protein eL36 (Candida albicans (strain SC5314 / ATCC MYA-2876) (Yeast)).